We begin with the raw amino-acid sequence, 283 residues long: tRNA-cytidine(32) 2-sulfurtransferase (283 aa).

The PP-loop motif motif lies at 37-42; the sequence is SGGKDS. Residues Cys112, Cys115, and Cys203 each contribute to the [4Fe-4S] cluster site.

The protein belongs to the TtcA family. In terms of assembly, homodimer. It depends on Mg(2+) as a cofactor. [4Fe-4S] cluster serves as cofactor.

The protein localises to the cytoplasm. The catalysed reaction is cytidine(32) in tRNA + S-sulfanyl-L-cysteinyl-[cysteine desulfurase] + AH2 + ATP = 2-thiocytidine(32) in tRNA + L-cysteinyl-[cysteine desulfurase] + A + AMP + diphosphate + H(+). Its pathway is tRNA modification. Functionally, catalyzes the ATP-dependent 2-thiolation of cytidine in position 32 of tRNA, to form 2-thiocytidine (s(2)C32). The sulfur atoms are provided by the cysteine/cysteine desulfurase (IscS) system. This is tRNA-cytidine(32) 2-sulfurtransferase from Legionella pneumophila (strain Corby).